A 358-amino-acid polypeptide reads, in one-letter code: UDP-N-acetylglucosamine--N-acetylmuramyl-(pentapeptide) pyrophosphoryl-undecaprenol N-acetylglucosamine transferase (358 aa).

Residues 11–13 (TGG), Asn120, Arg161, Ser188, and Gln282 contribute to the UDP-N-acetyl-alpha-D-glucosamine site.

It belongs to the glycosyltransferase 28 family. MurG subfamily.

Its subcellular location is the cell inner membrane. The enzyme catalyses di-trans,octa-cis-undecaprenyl diphospho-N-acetyl-alpha-D-muramoyl-L-alanyl-D-glutamyl-meso-2,6-diaminopimeloyl-D-alanyl-D-alanine + UDP-N-acetyl-alpha-D-glucosamine = di-trans,octa-cis-undecaprenyl diphospho-[N-acetyl-alpha-D-glucosaminyl-(1-&gt;4)]-N-acetyl-alpha-D-muramoyl-L-alanyl-D-glutamyl-meso-2,6-diaminopimeloyl-D-alanyl-D-alanine + UDP + H(+). It participates in cell wall biogenesis; peptidoglycan biosynthesis. In terms of biological role, cell wall formation. Catalyzes the transfer of a GlcNAc subunit on undecaprenyl-pyrophosphoryl-MurNAc-pentapeptide (lipid intermediate I) to form undecaprenyl-pyrophosphoryl-MurNAc-(pentapeptide)GlcNAc (lipid intermediate II). This chain is UDP-N-acetylglucosamine--N-acetylmuramyl-(pentapeptide) pyrophosphoryl-undecaprenol N-acetylglucosamine transferase, found in Synechococcus sp. (strain CC9902).